The primary structure comprises 395 residues: Elongation factor Tu (395 aa).

The region spanning 10–204 (KPHVNIGTIG…AVDEYIPTPQ (195 aa)) is the tr-type G domain. A G1 region spans residues 19–26 (GHVDHGKT). 19–26 (GHVDHGKT) is a GTP binding site. Thr26 is a Mg(2+) binding site. The G2 stretch occupies residues 60–64 (GITIS). The tract at residues 81–84 (DCPG) is G3. Residues 81–85 (DCPGH) and 136–139 (NKCD) each bind GTP. The G4 stretch occupies residues 136–139 (NKCD). Residues 174–176 (SAL) are G5.

It belongs to the TRAFAC class translation factor GTPase superfamily. Classic translation factor GTPase family. EF-Tu/EF-1A subfamily. Monomer.

It is found in the cytoplasm. It carries out the reaction GTP + H2O = GDP + phosphate + H(+). Its function is as follows. GTP hydrolase that promotes the GTP-dependent binding of aminoacyl-tRNA to the A-site of ribosomes during protein biosynthesis. This chain is Elongation factor Tu, found in Geobacillus kaustophilus (strain HTA426).